A 552-amino-acid chain; its full sequence is Urocanate hydratase (552 aa).

Residues Gly-49 to Gly-50, Gln-127, Gly-173 to Gly-175, Asp-193, Asn-239 to Ala-240, Gln-260 to His-264, Tyr-270 to Ile-271, and Tyr-319 contribute to the NAD(+) site. Cys-407 is an active-site residue. Gly-489 lines the NAD(+) pocket.

This sequence belongs to the urocanase family. The cofactor is NAD(+).

The protein localises to the cytoplasm. It carries out the reaction 4-imidazolone-5-propanoate = trans-urocanate + H2O. It participates in amino-acid degradation; L-histidine degradation into L-glutamate; N-formimidoyl-L-glutamate from L-histidine: step 2/3. Functionally, catalyzes the conversion of urocanate to 4-imidazolone-5-propionate. This Bacillus mycoides (strain KBAB4) (Bacillus weihenstephanensis) protein is Urocanate hydratase.